The sequence spans 197 residues: Dephospho-CoA kinase (197 aa).

The 195-residue stretch at I3–P197 folds into the DPCK domain. ATP is bound at residue A11–T16.

The protein belongs to the CoaE family.

It localises to the cytoplasm. The catalysed reaction is 3'-dephospho-CoA + ATP = ADP + CoA + H(+). Its pathway is cofactor biosynthesis; coenzyme A biosynthesis; CoA from (R)-pantothenate: step 5/5. Catalyzes the phosphorylation of the 3'-hydroxyl group of dephosphocoenzyme A to form coenzyme A. This chain is Dephospho-CoA kinase, found in Geobacter sulfurreducens (strain ATCC 51573 / DSM 12127 / PCA).